Consider the following 439-residue polypeptide: uncharacterized protein (439 aa).

CBS domains follow at residues 195–254 (LTPA…SIEK) and 256–314 (MTKN…KQPQ).

This is an uncharacterized protein from Bacillus subtilis (strain 168).